Here is a 342-residue protein sequence, read N- to C-terminus: Ketol-acid reductoisomerase (NADP(+)) (342 aa).

One can recognise a KARI N-terminal Rossmann domain in the interval 2 to 181 (VKVYYNGDIK…GGARAGVLET (180 aa)). Residues 25–28 (YGSQ), R48, S52, and 82–85 (DEQQ) each bind NADP(+). H107 is a catalytic residue. Residue G133 coordinates NADP(+). The KARI C-terminal knotted domain maps to 182–327 (TFKEETETDL…RQLREMMPFV (146 aa)). Positions 190, 194, 226, and 230 each coordinate Mg(2+). S251 serves as a coordination point for substrate.

The protein belongs to the ketol-acid reductoisomerase family. Mg(2+) is required as a cofactor.

The enzyme catalyses (2R)-2,3-dihydroxy-3-methylbutanoate + NADP(+) = (2S)-2-acetolactate + NADPH + H(+). It carries out the reaction (2R,3R)-2,3-dihydroxy-3-methylpentanoate + NADP(+) = (S)-2-ethyl-2-hydroxy-3-oxobutanoate + NADPH + H(+). It participates in amino-acid biosynthesis; L-isoleucine biosynthesis; L-isoleucine from 2-oxobutanoate: step 2/4. It functions in the pathway amino-acid biosynthesis; L-valine biosynthesis; L-valine from pyruvate: step 2/4. Functionally, involved in the biosynthesis of branched-chain amino acids (BCAA). Catalyzes an alkyl-migration followed by a ketol-acid reduction of (S)-2-acetolactate (S2AL) to yield (R)-2,3-dihydroxy-isovalerate. In the isomerase reaction, S2AL is rearranged via a Mg-dependent methyl migration to produce 3-hydroxy-3-methyl-2-ketobutyrate (HMKB). In the reductase reaction, this 2-ketoacid undergoes a metal-dependent reduction by NADPH to yield (R)-2,3-dihydroxy-isovalerate. The polypeptide is Ketol-acid reductoisomerase (NADP(+)) (Bacillus velezensis (strain DSM 23117 / BGSC 10A6 / LMG 26770 / FZB42) (Bacillus amyloliquefaciens subsp. plantarum)).